A 62-amino-acid polypeptide reads, in one-letter code: Rubredoxin-2 (62 aa).

A Rubredoxin-like domain is found at 7–58 (MWRCQMVNCGYVYDPDRGDKRRKVPAGTKFEDLPEDWRCPVCGAGKKSFRRL). Residues C10, C15, C45, and C48 each contribute to the Fe cation site.

This sequence belongs to the rubredoxin family. As to quaternary structure, monomer. Fe(3+) is required as a cofactor.

Functionally, rubredoxin is a small nonheme, iron protein lacking acid-labile sulfide. Its single Fe, chelated to 4 Cys, functions as an electron acceptor and may also stabilize the conformation of the molecule. The chain is Rubredoxin-2 (rd2) from Desulfovibrio desulfuricans (strain ATCC 27774 / DSM 6949 / MB).